The sequence spans 513 residues: ATP synthase subunit alpha (513 aa).

Residue 169 to 176 (GDRQCGKT) participates in ATP binding.

Belongs to the ATPase alpha/beta chains family. F-type ATPases have 2 components, CF(1) - the catalytic core - and CF(0) - the membrane proton channel. CF(1) has five subunits: alpha(3), beta(3), gamma(1), delta(1), epsilon(1). CF(0) has three main subunits: a(1), b(2) and c(9-12). The alpha and beta chains form an alternating ring which encloses part of the gamma chain. CF(1) is attached to CF(0) by a central stalk formed by the gamma and epsilon chains, while a peripheral stalk is formed by the delta and b chains.

Its subcellular location is the cell inner membrane. The catalysed reaction is ATP + H2O + 4 H(+)(in) = ADP + phosphate + 5 H(+)(out). Produces ATP from ADP in the presence of a proton gradient across the membrane. The alpha chain is a regulatory subunit. This Burkholderia mallei (strain NCTC 10229) protein is ATP synthase subunit alpha.